Here is a 232-residue protein sequence, read N- to C-terminus: Ubiquinone biosynthesis O-methyltransferase (232 aa).

Residues arginine 36, glycine 55, aspartate 76, and leucine 120 each coordinate S-adenosyl-L-methionine.

Belongs to the methyltransferase superfamily. UbiG/COQ3 family.

It carries out the reaction a 3-demethylubiquinol + S-adenosyl-L-methionine = a ubiquinol + S-adenosyl-L-homocysteine + H(+). The enzyme catalyses a 3-(all-trans-polyprenyl)benzene-1,2-diol + S-adenosyl-L-methionine = a 2-methoxy-6-(all-trans-polyprenyl)phenol + S-adenosyl-L-homocysteine + H(+). The protein operates within cofactor biosynthesis; ubiquinone biosynthesis. In terms of biological role, O-methyltransferase that catalyzes the 2 O-methylation steps in the ubiquinone biosynthetic pathway. This Stutzerimonas stutzeri (strain A1501) (Pseudomonas stutzeri) protein is Ubiquinone biosynthesis O-methyltransferase.